The chain runs to 302 residues: Recombination-associated protein RdgC (302 aa).

It belongs to the RdgC family.

It localises to the cytoplasm. Its subcellular location is the nucleoid. May be involved in recombination. In Halorhodospira halophila (strain DSM 244 / SL1) (Ectothiorhodospira halophila (strain DSM 244 / SL1)), this protein is Recombination-associated protein RdgC.